We begin with the raw amino-acid sequence, 500 residues long: NAD(P)H-quinone oxidoreductase chain 4, chloroplastic (500 aa).

The next 14 helical transmembrane spans lie at 4 to 24 (FPWLTIIVVFPIFAGSLIFFL), 35 to 55 (YTICICILELLLTTYAFCYHF), 87 to 107 (IGPILLTGFITTLATLAAWPI), 113 to 130 (LFHFLMLAMYSGQIGSFS), 134 to 154 (LLLFFIMWELELIPVYLLLCM), 167 to 187 (FILYTAGGSVFLLMGVLGVAL), 208 to 228 (VLEIIFYIGFFIAFAVKSPII), 242 to 262 (HYSTCMLLAGILLKMGAYGLI), 272 to 292 (AHSIFSPWLMIIGTIQIIYAA), 305 to 325 (IAYSSVSHMGFIIIGISSLTD), 330 to 350 (GALLQIISHGFIGAALFFLAG), 386 to 406 (LALPGMSGFVAELIVFFGIIT), 411 to 431 (LLIPKILITFVMAIGMILTPI), and 462 to 482 (LFLSISIFLPVIGIGIYPDFV).

It belongs to the complex I subunit 4 family.

The protein resides in the plastid. The protein localises to the chloroplast thylakoid membrane. The enzyme catalyses a plastoquinone + NADH + (n+1) H(+)(in) = a plastoquinol + NAD(+) + n H(+)(out). It catalyses the reaction a plastoquinone + NADPH + (n+1) H(+)(in) = a plastoquinol + NADP(+) + n H(+)(out). This Nicotiana tomentosiformis (Tobacco) protein is NAD(P)H-quinone oxidoreductase chain 4, chloroplastic.